The primary structure comprises 404 residues: Putative gustatory receptor 94a (404 aa).

Over 1–11 the chain is Cytoplasmic; that stretch reads MDFTSDYAHRR. The helical transmembrane segment at 12-32 threads the bilayer; that stretch reads MVKFLTIILIGFMTVFGLLAN. Residues 33–43 are Extracellular-facing; that stretch reads RYRAGRRERFR. The chain crosses the membrane as a helical span at residues 44-64; it reads FSKANLAFASLWAIAFSLVYG. Topologically, residues 65–133 are cytoplasmic; the sequence is RQIYKEYQEG…RLDSRSLYIS (69 aa). The chain crosses the membrane as a helical span at residues 134–154; the sequence is IVLALVKTVAFPLTIEVAFIL. Over 155–171 the chain is Extracellular; the sequence is QQRRQHPEMSLIWTLYR. A helical transmembrane segment spans residues 172 to 192; it reads LFPLIISNFLNNCYFGAMVVV. The Cytoplasmic portion of the chain corresponds to 193–260; the sequence is KEILYALNRR…HSGKYLTPMS (68 aa). A helical membrane pass occupies residues 261-281; sequence LSMILSLICHLLGITVGFYSL. The Extracellular portion of the chain corresponds to 282-296; sequence YYAIADTLIMGKPYD. The helical transmembrane segment at 297-317 threads the bilayer; sequence GLGSLINLVFLSISLAEITLL. The Cytoplasmic segment spans residues 318-376; it reads THLCNHLLVATRRSAVILQEMNLQHADSRYRQAVHGFTLLVTVTKYQIKPLGLYELDMR. Residues 377-397 form a helical membrane-spanning segment; it reads LISNVFSAVASFLLILVQADL. At 398–404 the chain is on the extracellular side; that stretch reads SQRFKMQ.

It belongs to the insect chemoreceptor superfamily. Gustatory receptor (GR) family. Gr22e subfamily. In larvae, is expressed in neurons of the terminal external chemosensory organ.

It localises to the cell membrane. Its function is as follows. Probable gustatory receptor which mediates acceptance or avoidance behavior, depending on its substrates. The chain is Putative gustatory receptor 94a (Gr94a) from Drosophila melanogaster (Fruit fly).